The chain runs to 433 residues: 4-hydroxy-3-methylbut-2-en-1-yl diphosphate synthase (flavodoxin) (433 aa).

The segment covering 1–10 has biased composition (polar residues); it reads MRYMQDSSMP. The disordered stretch occupies residues 1 to 24; sequence MRYMQDSSMPCQDASPPDVGAAPR. 4 residues coordinate [4Fe-4S] cluster: Cys-320, Cys-323, Cys-366, and Glu-373.

Belongs to the IspG family. [4Fe-4S] cluster is required as a cofactor.

It catalyses the reaction (2E)-4-hydroxy-3-methylbut-2-enyl diphosphate + oxidized [flavodoxin] + H2O + 2 H(+) = 2-C-methyl-D-erythritol 2,4-cyclic diphosphate + reduced [flavodoxin]. It functions in the pathway isoprenoid biosynthesis; isopentenyl diphosphate biosynthesis via DXP pathway; isopentenyl diphosphate from 1-deoxy-D-xylulose 5-phosphate: step 5/6. Its function is as follows. Converts 2C-methyl-D-erythritol 2,4-cyclodiphosphate (ME-2,4cPP) into 1-hydroxy-2-methyl-2-(E)-butenyl 4-diphosphate. The chain is 4-hydroxy-3-methylbut-2-en-1-yl diphosphate synthase (flavodoxin) from Bordetella bronchiseptica (strain ATCC BAA-588 / NCTC 13252 / RB50) (Alcaligenes bronchisepticus).